The sequence spans 462 residues: CCA-adding enzyme (462 aa).

Residues Ser-54 and Arg-57 each coordinate ATP. CTP is bound by residues Ser-54 and Arg-57. The Mg(2+) site is built by Asp-66, Asp-68, and Asp-117. Positions 140, 160, and 169 each coordinate ATP. Residues His-140, Lys-160, and Tyr-169 each contribute to the CTP site.

The protein belongs to the tRNA nucleotidyltransferase/poly(A) polymerase family. Archaeal CCA-adding enzyme subfamily. As to quaternary structure, homodimer. Requires Mg(2+) as cofactor.

It catalyses the reaction a tRNA precursor + 2 CTP + ATP = a tRNA with a 3' CCA end + 3 diphosphate. The catalysed reaction is a tRNA with a 3' CCA end + 2 CTP + ATP = a tRNA with a 3' CCACCA end + 3 diphosphate. Its function is as follows. Catalyzes the addition and repair of the essential 3'-terminal CCA sequence in tRNAs without using a nucleic acid template. Adds these three nucleotides in the order of C, C, and A to the tRNA nucleotide-73, using CTP and ATP as substrates and producing inorganic pyrophosphate. tRNA 3'-terminal CCA addition is required both for tRNA processing and repair. Also involved in tRNA surveillance by mediating tandem CCA addition to generate a CCACCA at the 3' terminus of unstable tRNAs. While stable tRNAs receive only 3'-terminal CCA, unstable tRNAs are marked with CCACCA and rapidly degraded. The protein is CCA-adding enzyme of Halorubrum lacusprofundi (strain ATCC 49239 / DSM 5036 / JCM 8891 / ACAM 34).